The following is a 367-amino-acid chain: 4-hydroxy-3-methylbut-2-en-1-yl diphosphate synthase (flavodoxin) (367 aa).

Residues C270, C273, C305, and E312 each coordinate [4Fe-4S] cluster.

The protein belongs to the IspG family. Requires [4Fe-4S] cluster as cofactor.

It catalyses the reaction (2E)-4-hydroxy-3-methylbut-2-enyl diphosphate + oxidized [flavodoxin] + H2O + 2 H(+) = 2-C-methyl-D-erythritol 2,4-cyclic diphosphate + reduced [flavodoxin]. It functions in the pathway isoprenoid biosynthesis; isopentenyl diphosphate biosynthesis via DXP pathway; isopentenyl diphosphate from 1-deoxy-D-xylulose 5-phosphate: step 5/6. Its function is as follows. Converts 2C-methyl-D-erythritol 2,4-cyclodiphosphate (ME-2,4cPP) into 1-hydroxy-2-methyl-2-(E)-butenyl 4-diphosphate. In Buchnera aphidicola subsp. Schizaphis graminum (strain Sg), this protein is 4-hydroxy-3-methylbut-2-en-1-yl diphosphate synthase (flavodoxin).